Reading from the N-terminus, the 596-residue chain is UvrABC system protein C (596 aa).

In terms of domain architecture, GIY-YIG spans 14-91; sequence DQPGCYLMKD…IKLHDPKYNV (78 aa). The UVR domain maps to 196–231; the sequence is EAVKKELEVKMLAAAENLEFERAKEFRDQIAHIDTV.

It belongs to the UvrC family. Interacts with UvrB in an incision complex.

It is found in the cytoplasm. The UvrABC repair system catalyzes the recognition and processing of DNA lesions. UvrC both incises the 5' and 3' sides of the lesion. The N-terminal half is responsible for the 3' incision and the C-terminal half is responsible for the 5' incision. The polypeptide is UvrABC system protein C (Lysinibacillus sphaericus (strain C3-41)).